The sequence spans 475 residues: tRNA-2-methylthio-N(6)-dimethylallyladenosine synthase (475 aa).

The MTTase N-terminal domain occupies 2–119; sequence AKLHITTWGC…LPEMINKIRG (118 aa). 6 residues coordinate [4Fe-4S] cluster: Cys-11, Cys-48, Cys-82, Cys-156, Cys-160, and Cys-163. In terms of domain architecture, Radical SAM core spans 142–374; it reads RAEGPTAFVS…QQRINHQAMQ (233 aa). Residues 377-440 form the TRAM domain; sequence RAMLGTEQRV…TNSLRGEVVR (64 aa).

Belongs to the methylthiotransferase family. MiaB subfamily. Monomer. The cofactor is [4Fe-4S] cluster.

The protein resides in the cytoplasm. The catalysed reaction is N(6)-dimethylallyladenosine(37) in tRNA + (sulfur carrier)-SH + AH2 + 2 S-adenosyl-L-methionine = 2-methylsulfanyl-N(6)-dimethylallyladenosine(37) in tRNA + (sulfur carrier)-H + 5'-deoxyadenosine + L-methionine + A + S-adenosyl-L-homocysteine + 2 H(+). Its function is as follows. Catalyzes the methylthiolation of N6-(dimethylallyl)adenosine (i(6)A), leading to the formation of 2-methylthio-N6-(dimethylallyl)adenosine (ms(2)i(6)A) at position 37 in tRNAs that read codons beginning with uridine. The protein is tRNA-2-methylthio-N(6)-dimethylallyladenosine synthase of Actinobacillus pleuropneumoniae serotype 3 (strain JL03).